A 213-amino-acid polypeptide reads, in one-letter code: Proton-translocating ferredoxin:NAD(+) oxidoreductase complex subunit E (213 aa).

6 helical membrane-spanning segments follow: residues 11 to 31 (GLIA…ALAT), 39 to 59 (FTMG…VSII), 69 to 89 (VPVY…VMQA), 93 to 113 (LLYK…IILA), 128 to 148 (FFDG…IGMI), and 170 to 190 (ALIM…VAIV).

The protein belongs to the NqrDE/RnfAE family. The complex is composed of six subunits: RnfA, RnfB, RnfC, RnfD, RnfE and RnfG.

Its subcellular location is the cell membrane. Functionally, part of a membrane-bound complex that couples electron transfer with translocation of ions across the membrane. Couples electron transfer from reduced ferredoxin to NAD(+) with translocation of H(+) out of the cell. Essential for energy conservation during autotrophic growth. Contributes to ATP synthesis during heterotrophic growth. This chain is Proton-translocating ferredoxin:NAD(+) oxidoreductase complex subunit E, found in Clostridium ljungdahlii (strain ATCC 55383 / DSM 13528 / PETC).